Consider the following 235-residue polypeptide: Octanoyltransferase (235 aa).

In terms of domain architecture, BPL/LPL catalytic spans 37 to 220 (AGGPDTLLLL…AVNDALDGWL (184 aa)). Residues 78-85 (RGGKITWH), 150-152 (AIG), and 163-165 (GFA) contribute to the substrate site. The active-site Acyl-thioester intermediate is Cys181.

It belongs to the LipB family.

Its subcellular location is the cytoplasm. It carries out the reaction octanoyl-[ACP] + L-lysyl-[protein] = N(6)-octanoyl-L-lysyl-[protein] + holo-[ACP] + H(+). The protein operates within protein modification; protein lipoylation via endogenous pathway; protein N(6)-(lipoyl)lysine from octanoyl-[acyl-carrier-protein]: step 1/2. Its function is as follows. Catalyzes the transfer of endogenously produced octanoic acid from octanoyl-acyl-carrier-protein onto the lipoyl domains of lipoate-dependent enzymes. Lipoyl-ACP can also act as a substrate although octanoyl-ACP is likely to be the physiological substrate. The chain is Octanoyltransferase from Mycobacterium leprae (strain Br4923).